The sequence spans 119 residues: DNA-binding protein inhibitor ID-3 (119 aa).

One can recognise a bHLH domain in the interval 28 to 80 (RGKGPAAEEPLSLLDDMNHCYSRLRELVPGVPRGTQLSQVEILQRVIDYILDL).

In terms of assembly, homodimer, and heterodimer with other HLH proteins. Interacts with COPS5 and COPS7A. Interacts with IFI204. Interacts with GATA4 and NKX2-5. Interacts with ANKRD2; both proteins cooperate in myoblast differentiation. Interacts with CLOCK and BMAL1. Expressed abundantly in lung, kidney and adrenal gland, but not in adult brain.

The protein localises to the nucleus. Transcriptional regulator (lacking a basic DNA binding domain) which negatively regulates the basic helix-loop-helix (bHLH) transcription factors by forming heterodimers and inhibiting their DNA binding and transcriptional activity. Implicated in regulating a variety of cellular processes, including cellular growth, senescence, differentiation, apoptosis, angiogenesis, and neoplastic transformation. Involved in myogenesis by inhibiting skeletal muscle and cardiac myocyte differentiation and promoting muscle precursor cells proliferation. Inhibits the binding of E2A-containing protein complexes to muscle creatine kinase E-box enhancer. Regulates the circadian clock by repressing the transcriptional activator activity of the CLOCK-BMAL1 heterodimer. The chain is DNA-binding protein inhibitor ID-3 (ID3) from Homo sapiens (Human).